Here is a 350-residue protein sequence, read N- to C-terminus: GTP 3',8-cyclase (350 aa).

Residues 27–245 (TFGRIATDLR…LRAHFTLVPD (219 aa)) enclose the Radical SAM core domain. Arg-36 provides a ligand contact to GTP. Residues Cys-43 and Cys-47 each contribute to the [4Fe-4S] cluster site. Position 49 (Tyr-49) interacts with S-adenosyl-L-methionine. A [4Fe-4S] cluster-binding site is contributed by Cys-50. Residue Arg-87 participates in GTP binding. Residue Gly-91 coordinates S-adenosyl-L-methionine. Thr-118 contacts GTP. S-adenosyl-L-methionine is bound at residue Ser-142. Lys-179 is a GTP binding site. Residue Met-213 participates in S-adenosyl-L-methionine binding. Positions 277 and 280 each coordinate [4Fe-4S] cluster. GTP is bound at residue 282-284 (RTR). Residue Cys-294 coordinates [4Fe-4S] cluster.

This sequence belongs to the radical SAM superfamily. MoaA family. As to quaternary structure, monomer and homodimer. The cofactor is [4Fe-4S] cluster.

The enzyme catalyses GTP + AH2 + S-adenosyl-L-methionine = (8S)-3',8-cyclo-7,8-dihydroguanosine 5'-triphosphate + 5'-deoxyadenosine + L-methionine + A + H(+). The protein operates within cofactor biosynthesis; molybdopterin biosynthesis. Its function is as follows. Catalyzes the cyclization of GTP to (8S)-3',8-cyclo-7,8-dihydroguanosine 5'-triphosphate. This chain is GTP 3',8-cyclase, found in Mycobacterium sp. (strain JLS).